The primary structure comprises 589 residues: Cell fusion protein aff-1 (589 aa).

The first 20 residues, M1–A20, serve as a signal peptide directing secretion. The Extracellular portion of the chain corresponds to R21–W537. Residues N58, N138, N205, N335, N382, N392, and N408 are each glycosylated (N-linked (GlcNAc...) asparagine). The chain crosses the membrane as a helical span at residues L538 to F558. The Cytoplasmic segment spans residues T559–Y589.

This sequence belongs to the EFF/AFF cell fusogen family. As to expression, expressed in amphid sheath cells.

The protein resides in the cell membrane. Its subcellular location is the apical cell membrane. Its function is as follows. Required for cell fusion events during development including the fusion of anchor cells (AC), vulval A and vulval D rings, and late epidermal seam cells. Required for amphid sheath cell fusion induced by entry into dauer stage. The protein is Cell fusion protein aff-1 of Caenorhabditis elegans.